Here is a 670-residue protein sequence, read N- to C-terminus: DNA ligase (670 aa).

NAD(+)-binding positions include 32 to 36 (DAYYD), 81 to 82 (SL), and Glu110. Lys112 (N6-AMP-lysine intermediate) is an active-site residue. Positions 133, 170, 289, and 313 each coordinate NAD(+). Positions 407, 410, 425, and 431 each coordinate Zn(2+). The region spanning 590-670 (EDELRLKGQT…ELLVFLGLAG (81 aa)) is the BRCT domain.

The protein belongs to the NAD-dependent DNA ligase family. LigA subfamily. The cofactor is Mg(2+). Requires Mn(2+) as cofactor.

The enzyme catalyses NAD(+) + (deoxyribonucleotide)n-3'-hydroxyl + 5'-phospho-(deoxyribonucleotide)m = (deoxyribonucleotide)n+m + AMP + beta-nicotinamide D-nucleotide.. DNA ligase that catalyzes the formation of phosphodiester linkages between 5'-phosphoryl and 3'-hydroxyl groups in double-stranded DNA using NAD as a coenzyme and as the energy source for the reaction. It is essential for DNA replication and repair of damaged DNA. This chain is DNA ligase, found in Shewanella denitrificans (strain OS217 / ATCC BAA-1090 / DSM 15013).